The following is a 726-amino-acid chain: PTS system glucose-specific EIICBA component (726 aa).

A PTS EIIC type-1 domain is found at 1–453 (MMKDTFKNVL…FNYATPGRNG (453 aa)). Transmembrane regions (helical) follow at residues 18 to 38 (FGKA…MISI), 62 to 82 (IGWG…GGSW), 90 to 110 (AFAA…IFGV), 139 to 159 (VLEA…GFVG), 184 to 204 (FVPF…AAFW), 311 to 331 (FKVG…VAIY), 344 to 364 (GMMI…PIEY), 365 to 385 (MFMF…GAAF), and 419 to 439 (IVNF…IANF). Residues 473-555 (GSQAVNIINL…QDILDSGEII (83 aa)) form the PTS EIIB type-1 domain. Catalysis depends on Cys495, which acts as the Phosphocysteine intermediate; for EIIB activity. One can recognise a PTS EIIA type-1 domain in the interval 596 to 700 (DPVFAQKMMG…ETSTVVVFTN (105 aa)). Residue His648 is the Tele-phosphohistidine intermediate; for EIIA activity of the active site.

The protein resides in the cell membrane. It catalyses the reaction N(pros)-phospho-L-histidyl-[protein] + D-glucose(out) = D-glucose 6-phosphate(in) + L-histidyl-[protein]. Functionally, the phosphoenolpyruvate-dependent sugar phosphotransferase system (sugar PTS), a major carbohydrate active transport system, catalyzes the phosphorylation of incoming sugar substrates concomitantly with their translocation across the cell membrane. This system is involved in glucose transport. The polypeptide is PTS system glucose-specific EIICBA component (exp5) (Streptococcus pneumoniae serotype 4 (strain ATCC BAA-334 / TIGR4)).